The primary structure comprises 78 residues: DNA-directed RNA polymerase subunit omega (78 aa).

It belongs to the RNA polymerase subunit omega family. In cyanobacteria the RNAP catalytic core is composed of 2 alpha, 1 beta, 1 beta', 1 gamma and 1 omega subunit. When a sigma factor is associated with the core the holoenzyme is formed, which can initiate transcription.

It carries out the reaction RNA(n) + a ribonucleoside 5'-triphosphate = RNA(n+1) + diphosphate. Functionally, promotes RNA polymerase assembly. Latches the N- and C-terminal regions of the beta' subunit thereby facilitating its interaction with the beta and alpha subunits. This chain is DNA-directed RNA polymerase subunit omega, found in Prochlorococcus marinus (strain AS9601).